Here is a 385-residue protein sequence, read N- to C-terminus: Spermidine/putrescine import ATP-binding protein PotA (385 aa).

Residues I6 to I238 form the ABC transporter domain. G40 to S47 contacts ATP.

Belongs to the ABC transporter superfamily. Spermidine/putrescine importer (TC 3.A.1.11.1) family. In terms of assembly, the complex is composed of two ATP-binding proteins (PotA), two transmembrane proteins (PotB and PotC) and a solute-binding protein (PotD).

It is found in the cell membrane. The enzyme catalyses ATP + H2O + polyamine-[polyamine-binding protein]Side 1 = ADP + phosphate + polyamineSide 2 + [polyamine-binding protein]Side 1.. Functionally, part of the ABC transporter complex PotABCD involved in spermidine/putrescine import. Responsible for energy coupling to the transport system. The polypeptide is Spermidine/putrescine import ATP-binding protein PotA (Streptococcus sanguinis (strain SK36)).